Here is a 343-residue protein sequence, read N- to C-terminus: Selenide, water dikinase (343 aa).

U16 is an active-site residue. Residue U16 is a non-standard amino acid, selenocysteine. ATP contacts are provided by residues K19 and 46–48; that span reads GAE. Residue D49 participates in Mg(2+) binding. Residues D66, D89, and 137–139 contribute to the ATP site; that span reads GHT. Mg(2+) is bound at residue D89. D225 is a Mg(2+) binding site.

The protein belongs to the selenophosphate synthase 1 family. Class I subfamily. Homodimer. It depends on Mg(2+) as a cofactor.

The catalysed reaction is hydrogenselenide + ATP + H2O = selenophosphate + AMP + phosphate + 2 H(+). Synthesizes selenophosphate from selenide and ATP. The protein is Selenide, water dikinase of Geobacter sp. (strain M21).